The sequence spans 84 residues: Small ribosomal subunit protein uS17 (84 aa).

This sequence belongs to the universal ribosomal protein uS17 family. As to quaternary structure, part of the 30S ribosomal subunit.

Its function is as follows. One of the primary rRNA binding proteins, it binds specifically to the 5'-end of 16S ribosomal RNA. In Aliivibrio salmonicida (strain LFI1238) (Vibrio salmonicida (strain LFI1238)), this protein is Small ribosomal subunit protein uS17.